We begin with the raw amino-acid sequence, 483 residues long: Jacalin-related lectin 13 (483 aa).

Positions 1–20 are disordered; it reads MTQKLESVGSERKSSEYMWD. Jacalin-type lectin domains are found at residues 2–147, 150–295, and 307–461; these read TQKL…YVTW, PARM…YFTT, and FREK…YFFP.

Belongs to the jacalin lectin family.

In Arabidopsis thaliana (Mouse-ear cress), this protein is Jacalin-related lectin 13 (JAL13).